Reading from the N-terminus, the 72-residue chain is MDIKEIEELLIQLESKIAFQDATIEELNQVVTQQQIEISRFKEALKIVTERLKSSQSSMLARPEDETPPPHY.

A disordered region spans residues 53-72 (KSSQSSMLARPEDETPPPHY).

The protein belongs to the SlyX family.

This chain is Protein SlyX, found in Proteus mirabilis (strain HI4320).